The chain runs to 2271 residues: Serine-rich adhesin for platelets (2271 aa).

Residues 1-89 form the signal peptide; it reads MSKRQKAFHD…VNMLHDQQAF (89 aa). The tract at residues 90-230 is serine-rich repeat region 1, SRR1; that stretch reads AASDAPLTSE…KTSTTSTSTA (141 aa). Residues 100 to 111 are compositionally biased toward polar residues; the sequence is LNTQSETVGNQN. The disordered stretch occupies residues 100–229; sequence LNTQSETVGN…NKTSTTSTST (130 aa). The span at 112–128 shows a compositional bias: low complexity; it reads STTIEASTSTADSTSVT. Over residues 129–140 the composition is skewed to polar residues; that stretch reads KNSSSVQTSNSD. The segment covering 150-229 has biased composition (low complexity); it reads VTSTTNSTSN…NKTSTTSTST (80 aa). The segment at 231–751 is non-repeat region (NRR); the sequence is PVKLRTFSRL…TTFKYEVTRN (521 aa). The tract at residues 245 to 491 is L-lectin module; sequence FASAATTTAV…QQVQFGTFEY (247 aa). The Ca(2+) site is built by aspartate 365, tyrosine 367, asparagine 369, and aspartate 382. The tract at residues 492–571 is beta-grasp module; sequence TESAVTQVRY…NAGQSVTYYF (80 aa). Residues 572-659 form a cadherin-like module-1 region; it reads TDVKAPTVTV…KSTTTFTINV (88 aa). Ca(2+)-binding residues include aspartate 573, lysine 575, aspartate 601, asparagine 602, aspartate 645, aspartate 661, threonine 663, aspartate 690, asparagine 691, and aspartate 734. The tract at residues 660–751 is cadherin-like module-2; that stretch reads VDTTAPTVTP…TTFKYEVTRN (92 aa). Disordered regions lie at residues 751–791 and 806–2242; these read NSMS…VVST and SVSA…NGLL. Composition is skewed to low complexity over residues 752–791, 806–1392, and 1402–2214; these read SMSD…VVST, SVSA…LSLS, and SNSA…ATSE. The segment at 752–2232 is serine-rich repeat region 2, SRR2; sequence SMSDSVSTSG…AQSEKRLPDT (1481 aa). The LPXTG sorting signal signature appears at 2229-2233; sequence LPDTG. Threonine 2232 bears the Pentaglycyl murein peptidoglycan amidated threonine mark. Positions 2233–2271 are cleaved as a propeptide — removed by sortase; it reads GDSIKQNGLLGGVMTLLVGLGLMKRKKKKDENDQDDSQA.

Belongs to the serine-rich repeat protein (SRRP) family. In terms of processing, proteolytically cleaved by a metalloprotease. Post-translationally, glycosylated. It is probable that most of the Ser residues in SSR1 and SSR2 are O-GlcNAcylated. Sequential glycosylation by sugar transferases are able to generate complex sugar polymorphisms.

It localises to the secreted. The protein resides in the cell wall. Its function is as follows. Mediates binding to human platelets, possibly through a receptor-ligand interaction. Probably associated with virulence in endovascular infection. Plays a positive role in biofilm formation, possibly by self-association via the non-repeat region (NRR or binding region, BR). Binds to and plays a role in human lung epithelial cell invasion via the L-lectin module of its NRR domain; N-acetylneuraminic acid (Neu5Ac) inhibits binding. Treatment of host cells with neuraminidase decreases adherence of S.aureus cells, suggesting SraP recognizes a host terminal Neu5Ac moiety as a receptor. This Staphylococcus aureus (strain NCTC 8325 / PS 47) protein is Serine-rich adhesin for platelets.